Here is a 210-residue protein sequence, read N- to C-terminus: Protein GrpE (210 aa).

Residues 191–210 are disordered; sequence KGGPKPAEAETNSVFDEKDA.

This sequence belongs to the GrpE family. In terms of assembly, homodimer.

Its subcellular location is the cytoplasm. Functionally, participates actively in the response to hyperosmotic and heat shock by preventing the aggregation of stress-denatured proteins, in association with DnaK and GrpE. It is the nucleotide exchange factor for DnaK and may function as a thermosensor. Unfolded proteins bind initially to DnaJ; upon interaction with the DnaJ-bound protein, DnaK hydrolyzes its bound ATP, resulting in the formation of a stable complex. GrpE releases ADP from DnaK; ATP binding to DnaK triggers the release of the substrate protein, thus completing the reaction cycle. Several rounds of ATP-dependent interactions between DnaJ, DnaK and GrpE are required for fully efficient folding. The chain is Protein GrpE from Rhizobium etli (strain CIAT 652).